Consider the following 72-residue polypeptide: Prokaryotic ubiquitin-like protein Pup (72 aa).

Residues methionine 1–glutamine 10 are compositionally biased toward gly residues. A disordered region spans residues methionine 1 to aspartate 45. Positions glycine 9–glutamate 60 form a coiled coil. The ARC ATPase binding stretch occupies residues glutamine 28–phenylalanine 66. Residues glutamate 31–aspartate 42 are compositionally biased toward basic and acidic residues. An Isoglutamyl lysine isopeptide (Glu-Lys) (interchain with K-? in acceptor proteins) cross-link involves residue glutamate 72.

Belongs to the prokaryotic ubiquitin-like protein family. Strongly interacts with the proteasome-associated ATPase ARC through a hydrophobic interface; the interacting region of Pup lies in its C-terminal half. There is one Pup binding site per ARC hexamer ring.

Its pathway is protein degradation; proteasomal Pup-dependent pathway. Its function is as follows. Protein modifier that is covalently attached to lysine residues of substrate proteins, thereby targeting them for proteasomal degradation. The tagging system is termed pupylation. The chain is Prokaryotic ubiquitin-like protein Pup from Streptomyces avermitilis (strain ATCC 31267 / DSM 46492 / JCM 5070 / NBRC 14893 / NCIMB 12804 / NRRL 8165 / MA-4680).